A 461-amino-acid chain; its full sequence is Protein ultraspiracle homolog (461 aa).

The modulating stretch occupies residues 1 to 112 (MSSVAKKDKR…NHPLSGSKHL (112 aa)). The interval 26–51 (PAPHQQQSMPSSQPSNFLQPLATPST) is disordered. Residues 27-40 (APHQQQSMPSSQPS) show a composition bias toward low complexity. Residues 41–51 (NFLQPLATPST) are compositionally biased toward polar residues. NR C4-type zinc fingers lie at residues 113–133 (CSIC…CEGC) and 149–173 (CRED…YQKC). The nuclear receptor DNA-binding region spans 113-185 (CSICGDRASG…CGMKREAVQE (73 aa)). Positions 185-192 (EERQRAAR) are hinge. Positions 203–452 (VQELSIERLL…SYIHDALRNH (250 aa)) constitute an NR LBD domain.

Belongs to the nuclear hormone receptor family. NR2 subfamily. As to quaternary structure, heterodimer of USP and ECR. Only the heterodimer is capable of high-affinity binding to ecdysone.

It localises to the nucleus. Functionally, receptor for ecdysone. May be an important modulator of insect metamorphosis. The polypeptide is Protein ultraspiracle homolog (USP) (Manduca sexta (Tobacco hawkmoth)).